Reading from the N-terminus, the 157-residue chain is 6,7-dimethyl-8-ribityllumazine synthase (157 aa).

5-amino-6-(D-ribitylamino)uracil-binding positions include Phe22, Ala57 to Glu59, and Thr81 to Ile83. Residue Gly86–Thr87 participates in (2S)-2-hydroxy-3-oxobutyl phosphate binding. His89 functions as the Proton donor in the catalytic mechanism. Residue Phe114 coordinates 5-amino-6-(D-ribitylamino)uracil. (2S)-2-hydroxy-3-oxobutyl phosphate is bound at residue Arg128.

This sequence belongs to the DMRL synthase family. Forms an icosahedral capsid composed of 60 subunits, arranged as a dodecamer of pentamers.

The enzyme catalyses (2S)-2-hydroxy-3-oxobutyl phosphate + 5-amino-6-(D-ribitylamino)uracil = 6,7-dimethyl-8-(1-D-ribityl)lumazine + phosphate + 2 H2O + H(+). It participates in cofactor biosynthesis; riboflavin biosynthesis; riboflavin from 2-hydroxy-3-oxobutyl phosphate and 5-amino-6-(D-ribitylamino)uracil: step 1/2. Its function is as follows. Catalyzes the formation of 6,7-dimethyl-8-ribityllumazine by condensation of 5-amino-6-(D-ribitylamino)uracil with 3,4-dihydroxy-2-butanone 4-phosphate. This is the penultimate step in the biosynthesis of riboflavin. This is 6,7-dimethyl-8-ribityllumazine synthase from Histophilus somni (strain 129Pt) (Haemophilus somnus).